A 144-amino-acid chain; its full sequence is MCTDVAFFSLDCLATWLGGVCSTSDLRLPNFGSLNVTVGILFNPGSGVLLTTAPEVPLAFMIDLVCEPVGLVDFLTTGVSRLETEENGPVEFVSGIADEPILACSAPERVFEATPFLLFFRLDLFVIASLHYNYGQYSSFWSLL.

An N-terminal signal peptide occupies residues 1-22; sequence MCTDVAFFSLDCLATWLGGVCS.

This is an uncharacterized protein from Saccharomyces cerevisiae (strain ATCC 204508 / S288c) (Baker's yeast).